Consider the following 197-residue polypeptide: ATP synthase subunit delta', mitochondrial (197 aa).

Residues 1-19 (MFRRATSTFLSRASATRRF) constitute a mitochondrion transit peptide.

The protein belongs to the ATPase epsilon chain family. In terms of assembly, F-type ATPases have 2 components, CF(1) - the catalytic core - and CF(0) - the membrane proton channel. CF(1) has five subunits: alpha(3), beta(3), gamma(1), delta(1), epsilon(1). CF(0) has three main subunits: a, b and c.

The protein localises to the mitochondrion. It is found in the mitochondrion inner membrane. Mitochondrial membrane ATP synthase (F(1)F(0) ATP synthase or Complex V) produces ATP from ADP in the presence of a proton gradient across the membrane which is generated by electron transport complexes of the respiratory chain. F-type ATPases consist of two structural domains, F(1) - containing the extramembraneous catalytic core, and F(0) - containing the membrane proton channel, linked together by a central stalk and a peripheral stalk. During catalysis, ATP turnover in the catalytic domain of F(1) is coupled via a rotary mechanism of the central stalk subunits to proton translocation. Part of the complex F(1) domain and of the central stalk which is part of the complex rotary element. Rotation of the central stalk against the surrounding alpha(3)beta(3) subunits leads to hydrolysis of ATP in three separate catalytic sites on the beta subunits. The chain is ATP synthase subunit delta', mitochondrial from Pisum sativum (Garden pea).